The chain runs to 240 residues: ATP synthase subunit a 1 (240 aa).

Transmembrane regions (helical) follow at residues 23–43, 82–102, 120–140, 186–206, and 207–227; these read GQVL…SVLA, VPFI…GALF, DINT…YAGF, LVVA…VMLL, and GLFT…AYIH.

It belongs to the ATPase A chain family. F-type ATPases have 2 components, CF(1) - the catalytic core - and CF(0) - the membrane proton channel. CF(1) has five subunits: alpha(3), beta(3), gamma(1), delta(1), epsilon(1). CF(0) has four main subunits: a, b, b' and c.

It is found in the cellular thylakoid membrane. In terms of biological role, key component of the proton channel; it plays a direct role in the translocation of protons across the membrane. This is ATP synthase subunit a 1 from Acaryochloris marina (strain MBIC 11017).